Consider the following 432-residue polypeptide: Alkaline protease secretion protein AprE (432 aa).

The Cytoplasmic segment spans residues M1 to R14. Residues L15–L36 form a helical membrane-spanning segment. Topologically, residues D37–N432 are periplasmic.

This sequence belongs to the membrane fusion protein (MFP) (TC 8.A.1) family.

The protein localises to the cell inner membrane. Its function is as follows. Involved in the secretion of alkaline protease. This Pseudomonas aeruginosa (strain ATCC 15692 / DSM 22644 / CIP 104116 / JCM 14847 / LMG 12228 / 1C / PRS 101 / PAO1) protein is Alkaline protease secretion protein AprE (aprE).